Here is a 182-residue protein sequence, read N- to C-terminus: Large ribosomal subunit protein uL5 (182 aa).

The protein belongs to the universal ribosomal protein uL5 family. Part of the 50S ribosomal subunit; part of the 5S rRNA/L5/L18/L25 subcomplex. Contacts the 5S rRNA and the P site tRNA. Forms a bridge to the 30S subunit in the 70S ribosome.

Functionally, this is one of the proteins that bind and probably mediate the attachment of the 5S RNA into the large ribosomal subunit, where it forms part of the central protuberance. In the 70S ribosome it contacts protein S13 of the 30S subunit (bridge B1b), connecting the 2 subunits; this bridge is implicated in subunit movement. Contacts the P site tRNA; the 5S rRNA and some of its associated proteins might help stabilize positioning of ribosome-bound tRNAs. This is Large ribosomal subunit protein uL5 from Thermosipho melanesiensis (strain DSM 12029 / CIP 104789 / BI429).